We begin with the raw amino-acid sequence, 255 residues long: Proteasome subunit alpha (255 aa).

It belongs to the peptidase T1A family. In terms of assembly, the 20S proteasome core is composed of 14 alpha and 14 beta subunits that assemble into four stacked heptameric rings, resulting in a barrel-shaped structure. The two inner rings, each composed of seven catalytic beta subunits, are sandwiched by two outer rings, each composed of seven alpha subunits. The catalytic chamber with the active sites is on the inside of the barrel. Has a gated structure, the ends of the cylinder being occluded by the N-termini of the alpha-subunits. Is capped at one or both ends by the proteasome regulatory ATPase, PAN.

Its subcellular location is the cytoplasm. The formation of the proteasomal ATPase PAN-20S proteasome complex, via the docking of the C-termini of PAN into the intersubunit pockets in the alpha-rings, triggers opening of the gate for substrate entry. Interconversion between the open-gate and close-gate conformations leads to a dynamic regulation of the 20S proteasome proteolysis activity. In terms of biological role, component of the proteasome core, a large protease complex with broad specificity involved in protein degradation. This Natronomonas pharaonis (strain ATCC 35678 / DSM 2160 / CIP 103997 / JCM 8858 / NBRC 14720 / NCIMB 2260 / Gabara) (Halobacterium pharaonis) protein is Proteasome subunit alpha.